Consider the following 405-residue polypeptide: SPbeta prophage-derived uncharacterized protein YonJ (405 aa).

Residues 72–101 (DESNNSLLELELKKVEIMEERKKLQAVKHE) adopt a coiled-coil conformation.

The polypeptide is SPbeta prophage-derived uncharacterized protein YonJ (yonJ) (Bacillus subtilis (strain 168)).